The sequence spans 178 residues: uncharacterized protein (178 aa).

The signal sequence occupies residues 1-19; that stretch reads MKKLLIVTMLFTLALSAQA.

The protein belongs to the opacity porin family.

This is an uncharacterized protein from Haemophilus influenzae (strain ATCC 51907 / DSM 11121 / KW20 / Rd).